We begin with the raw amino-acid sequence, 113 residues long: Integration host factor subunit alpha (113 aa).

The disordered stretch occupies residues 87–113 (NALNGEVSDETTEGADDDDDEEGEGDE). Over residues 93-113 (VSDETTEGADDDDDEEGEGDE) the composition is skewed to acidic residues.

Belongs to the bacterial histone-like protein family. Heterodimer of an alpha and a beta chain.

This protein is one of the two subunits of integration host factor, a specific DNA-binding protein that functions in genetic recombination as well as in transcriptional and translational control. The chain is Integration host factor subunit alpha from Anaeromyxobacter dehalogenans (strain 2CP-1 / ATCC BAA-258).